We begin with the raw amino-acid sequence, 428 residues long: Adenylosuccinate synthetase (428 aa).

Residues 12–18 (GDEGKGK) and 40–42 (GHT) contribute to the GTP site. The active-site Proton acceptor is Asp13. Positions 13 and 40 each coordinate Mg(2+). IMP is bound by residues 13–16 (DEGK), 38–41 (NAGH), Thr128, Arg142, Gln223, Thr238, and Arg302. The Proton donor role is filled by His41. A substrate-binding site is contributed by 298-304 (TTTGRPR). Residues Arg304, 330 to 332 (SID), and 412 to 414 (SVG) contribute to the GTP site.

The protein belongs to the adenylosuccinate synthetase family. In terms of assembly, homodimer. Requires Mg(2+) as cofactor.

The protein localises to the cytoplasm. The enzyme catalyses IMP + L-aspartate + GTP = N(6)-(1,2-dicarboxyethyl)-AMP + GDP + phosphate + 2 H(+). It participates in purine metabolism; AMP biosynthesis via de novo pathway; AMP from IMP: step 1/2. In terms of biological role, plays an important role in the de novo pathway of purine nucleotide biosynthesis. Catalyzes the first committed step in the biosynthesis of AMP from IMP. The protein is Adenylosuccinate synthetase of Geobacillus sp. (strain WCH70).